The following is a 125-amino-acid chain: Small ribosomal subunit protein uS12 (125 aa).

3-methylthioaspartic acid is present on D89. The segment at 104-125 is disordered; it reads TAGVKDRSQSRSKYGAKASKQD.

This sequence belongs to the universal ribosomal protein uS12 family. As to quaternary structure, part of the 30S ribosomal subunit. Contacts proteins S8 and S17. May interact with IF1 in the 30S initiation complex.

Functionally, with S4 and S5 plays an important role in translational accuracy. Interacts with and stabilizes bases of the 16S rRNA that are involved in tRNA selection in the A site and with the mRNA backbone. Located at the interface of the 30S and 50S subunits, it traverses the body of the 30S subunit contacting proteins on the other side and probably holding the rRNA structure together. The combined cluster of proteins S8, S12 and S17 appears to hold together the shoulder and platform of the 30S subunit. The polypeptide is Small ribosomal subunit protein uS12 (Prochlorococcus marinus (strain MIT 9303)).